An 810-amino-acid chain; its full sequence is Volume-regulated anion channel subunit LRRC8A (810 aa).

M1 carries the N-acetylmethionine modification. The Cytoplasmic segment spans residues 1-22 (MIPVTELRYFADTQPAYRILKP). Residues 23 to 47 (WWDVFTDYISIVMLMIAVFGGTLQV) form a helical membrane-spanning segment. Topologically, residues 48–123 (TQDKMICLPC…YENRLHWFAK (76 aa)) are extracellular. 3 disulfides stabilise this stretch: C54-C310, C57-C65, and C113-C295. Residues N66 and N83 are each glycosylated (N-linked (GlcNAc...) asparagine). A helical transmembrane segment spans residues 124-142 (YFPYLVLLHTLIFLACSNF). The Cytoplasmic portion of the chain corresponds to 143-264 (WFKFPRTSSK…EEGDIVYRLY (122 aa)). At T200 the chain carries Phosphothreonine. S202 is modified (phosphoserine). Position 215 is a phosphothreonine (T215). At S217 the chain carries Phosphoserine. A helical transmembrane segment spans residues 265–286 (MRQTIIKVIKFALIICYTVYYV). Residues 287-316 (HNIKFDVDCTVDIESLTGYRTYRCAHPLAT) lie on the Extracellular side of the membrane. The helical transmembrane segment at 317 to 341 (LFKILASFYISLVIFYGLICMYTLW) threads the bilayer. Over 342–810 (WMLRRSLKKY…RLWRADKEQA (469 aa)) the chain is Cytoplasmic. LRR repeat units follow at residues 411-422 (WTLDKLRQRLTK), 423-445 (NAQD…VFDL), 447-468 (ELEV…IAQL), 469-492 (TGLK…AFLR), 493-515 (ENLR…IYSL), 518-542 (LEEL…GLRE), 543-565 (LKRL…VTDV), 567-589 (VHLQ…SLKK), 590-613 (MVNL…IFSL), 614-637 (HNLQ…SFQH), 639-661 (HRLT…IGNL), 662-684 (TNLE…LFYC), 686-707 (KLRY…IGLL), 708-730 (QNLQ…LFQC), 732-753 (KLRA…VGEL), 754-776 (TNLT…LGEC), and 778-801 (LLKR…VKER). The Di-leucine motif motif lies at 706–707 (LL).

The protein belongs to the LRRC8 family. As to quaternary structure, heterohexamer; oligomerizes with other LRRC8 proteins (LRRC8B, LRRC8C, LRRC8D and/or LRRC8E) to form a heterohexamer. Can form homohexamers in vitro, but these have lower conductance than heterohexamers. In vivo, the subunit composition may depend primarily on expression levels, and heterooligomeric channels containing various proportions of the different LRRC8 proteins may coexist. Interact with GRB2. Interacts with NOX4; this interaction prevents the ubiquitin-mediated degradation of LRRC8A. Post-translationally, N-glycosylated. Ubiquitously expressed. High levels detected in the bone marrow; lower levels found in peripheral blood cells. Highly expressed in pancreatic beta cells.

Its subcellular location is the cell membrane. The protein resides in the lysosome membrane. It catalyses the reaction chloride(in) = chloride(out). It carries out the reaction iodide(out) = iodide(in). The enzyme catalyses taurine(out) = taurine(in). The catalysed reaction is L-aspartate(out) = L-aspartate(in). It catalyses the reaction L-glutamate(out) = L-glutamate(in). It carries out the reaction myo-inositol(out) = myo-inositol(in). The enzyme catalyses 2',3'-cGAMP(out) = 2',3'-cGAMP(in). Inhibited by (4-[(2-butyl-6,7-dichloro-2-cyclopentyl-2,3-dihydro-1-oxo-1H-inden-5-yl)oxy]butanoic acid), which plugs the channel like a cork in a bottle by binding in the extracellular selectivity filter and sterically occluding ion conduction. Lipids may block conduction in closed heterohexameric channels. In terms of biological role, essential component of the volume-regulated anion channel (VRAC, also named VSOAC channel), an anion channel required to maintain a constant cell volume in response to extracellular or intracellular osmotic changes. The VRAC channel conducts iodide better than chloride and can also conduct organic osmolytes like taurine. Mediates efflux of amino acids, such as aspartate and glutamate, in response to osmotic stress. In complex with LRRC8C or LRRC8E, acts as a transporter of immunoreactive cyclic dinucleotide GMP-AMP (2'-3'-cGAMP), an immune messenger produced in response to DNA virus in the cytosol: mediates both import and export of 2'-3'-cGAMP, thereby promoting transfer of 2'-3'-cGAMP to bystander cells. In contrast, complexes containing LRRC8D inhibit transport of 2'-3'-cGAMP. Required for in vivo channel activity, together with at least one other family member (LRRC8B, LRRC8C, LRRC8D or LRRC8E); channel characteristics depend on the precise subunit composition. Can form functional channels by itself (in vitro). Involved in B-cell development: required for the pro-B cell to pre-B cell transition. Also required for T-cell development. Required for myoblast differentiation: VRAC activity promotes membrane hyperpolarization and regulates insulin-stimulated glucose metabolism and oxygen consumption. Also acts as a regulator of glucose-sensing in pancreatic beta cells: VRAC currents, generated in response to hypotonicity- or glucose-induced beta cell swelling, depolarize cells, thereby causing electrical excitation, leading to increase glucose sensitivity and insulin secretion. Also plays a role in lysosome homeostasis by forming functional lysosomal VRAC channels in response to low cytoplasmic ionic strength condition: lysosomal VRAC channels are necessary for the formation of large lysosome-derived vacuoles, which store and then expel excess water to maintain cytosolic water homeostasis. Acts as a key factor in NLRP3 inflammasome activation by modulating itaconate efflux and mitochondria function. The chain is Volume-regulated anion channel subunit LRRC8A from Mus musculus (Mouse).